A 181-amino-acid chain; its full sequence is MEPEIKIVNVVVSTQIGTDIDLEYAADILDNAEYEPEQFPGLVCRLSDPKVALLIFRSGKLNCTGAKSKEDAEIAIKKIIKELKDAGMDIIDNPEVNVQNMVATADLGIEPNLDDISTLEGTEYEPEQFPGLVYRLSDPKVVVLIFGSGKVVITGLKKKDDAYLALDKILSTLKELEEEYY.

2 repeat units span residues 7–83 (IVNV…IKEL) and 98–173 (VQNM…LSTL).

It belongs to the TBP family.

In terms of biological role, general factor that plays a role in the activation of archaeal genes transcribed by RNA polymerase. Binds specifically to the TATA box promoter element which lies close to the position of transcription initiation. This chain is TATA-box-binding protein (tbp), found in Methanothermococcus thermolithotrophicus (Methanococcus thermolithotrophicus).